The primary structure comprises 44 residues: Defensin ARD1 (44 aa).

3 cysteine pairs are disulfide-bonded: Cys7/Cys32, Cys18/Cys40, and Cys22/Cys42.

The protein localises to the secreted. In terms of biological role, possesses potent anti-fungal activity. This Archaeoprepona demophon (One-spotted leafwing butterfly) protein is Defensin ARD1.